The following is an 81-amino-acid chain: Sulfur carrier protein TusA (81 aa).

Cys-19 (cysteine persulfide intermediate) is an active-site residue.

It belongs to the sulfur carrier protein TusA family. As to quaternary structure, interacts with IscS.

The protein localises to the cytoplasm. It functions in the pathway tRNA modification. Sulfur carrier protein involved in sulfur trafficking in the cell. Part of a sulfur-relay system required for 2-thiolation during synthesis of 2-thiouridine of the modified wobble base 5-methylaminomethyl-2-thiouridine (mnm(5)s(2)U) in tRNA. Interacts with IscS and stimulates its cysteine desulfurase activity. Accepts an activated sulfur from IscS, which is then transferred to TusD, and thus determines the direction of sulfur flow from IscS to 2-thiouridine formation. Also appears to be involved in sulfur transfer for the biosynthesis of molybdopterin. This Klebsiella pneumoniae subsp. pneumoniae (strain ATCC 700721 / MGH 78578) protein is Sulfur carrier protein TusA.